The chain runs to 159 residues: Small ribosomal subunit protein uS9 (159 aa).

The protein belongs to the universal ribosomal protein uS9 family.

The chain is Small ribosomal subunit protein uS9 from Beijerinckia indica subsp. indica (strain ATCC 9039 / DSM 1715 / NCIMB 8712).